The chain runs to 356 residues: Protein pelota homolog (356 aa).

Belongs to the eukaryotic release factor 1 family. Pelota subfamily. In terms of assembly, monomer. A divalent metal cation serves as cofactor.

It localises to the cytoplasm. May function in recognizing stalled ribosomes, interact with stem-loop structures in stalled mRNA molecules, and effect endonucleolytic cleavage of the mRNA. May play a role in the release non-functional ribosomes and degradation of damaged mRNAs. Has endoribonuclease activity. This chain is Protein pelota homolog, found in Aeropyrum pernix (strain ATCC 700893 / DSM 11879 / JCM 9820 / NBRC 100138 / K1).